Consider the following 126-residue polypeptide: Protein Wnt-1 (126 aa).

Residue serine 1 is the site of O-palmitoleoyl serine; by PORCN attachment. Residues cysteine 92 and cysteine 107 are joined by a disulfide bond. Residues asparagine 93 and asparagine 123 are each glycosylated (N-linked (GlcNAc...) asparagine).

Belongs to the Wnt family. In terms of processing, palmitoleoylation is required for efficient binding to frizzled receptors. Palmitoleoylation is necessary for proper trafficking to cell surface. Depalmitoleoylated by NOTUM, leading to inhibit Wnt signaling pathway.

It localises to the secreted. The protein localises to the extracellular space. It is found in the extracellular matrix. In terms of biological role, ligand for members of the frizzled family of seven transmembrane receptors. Acts in the canonical Wnt signaling pathway by promoting beta-catenin-dependent transcriptional activation. Plays an essential role in the development of the embryonic brain and central nervous system (CNS). Has a role in osteoblast function, bone development and bone homeostasis. This chain is Protein Wnt-1 (WNT-1), found in Plestiodon skiltonianus (Western skink).